Consider the following 103-residue polypeptide: Small ribosomal subunit protein uS10 (103 aa).

This sequence belongs to the universal ribosomal protein uS10 family. As to quaternary structure, part of the 30S ribosomal subunit.

Involved in the binding of tRNA to the ribosomes. The polypeptide is Small ribosomal subunit protein uS10 (Tolumonas auensis (strain DSM 9187 / NBRC 110442 / TA 4)).